The sequence spans 261 residues: Short chain dehydrogenase/reductase astE (261 aa).

Residues Ile-24, Asp-70, Asn-97, and Lys-131 each coordinate NADP(+). Catalysis depends on proton donor residues Ser-150 and Tyr-164. Tyr-164, Lys-168, Val-197, and Thr-199 together coordinate NADP(+). The Lowers pKa of active site Tyr role is filled by Lys-168.

It belongs to the short-chain dehydrogenases/reductases (SDR) family.

Its pathway is secondary metabolite biosynthesis; terpenoid biosynthesis. Short chain dehydrogenase/reductase; part of the gene cluster that mediates the biosynthesis of astellolides, drimane-type sesquiterpene esters that show antimicrobial, anti-inflammatory, and anti-tumor activities. The first step in astellolide biosynthesis is performed by the sesquiterpene cyclase astC that catalyzes the formation of drimanyl pyrophosphate from farnesyl pyrophosphate. Drimanyl pyrophosphate is then dephosphorylated by the sesquiterpene phosphatase astI to produce drimanyl monophosphate which is further dephosphorylated to drim-8-ene-11-ol by atsK. Drim-8-ene-11-ol is converted to confertifolin, probably by the cytochrome P450 monooxygenase astD and/or the dehydrogenase astE. The cytochrome P450 monooxygenases astB, astF and astJ then hydroxylate confertifolin at C6, C14, or C15 to form trihydroxy confertifolin. The nonribosomal peptide synthetase astA catalyzes ester bond formation between trihydroxy contifolin and benzoic acid (BA) or 4-hydroxy benzoic acid (4HBA), leading to the formation of dideacetyl astellolides A and B, respectively. Finally, the O-acetyltransferase astG converts dideacetyl astellolides A and B into deacetyl astellolides A and B. This Aspergillus oryzae (strain ATCC 42149 / RIB 40) (Yellow koji mold) protein is Short chain dehydrogenase/reductase astE.